The sequence spans 85 residues: MASLLQLRDAIALNGSAEASQLSRQLAIPLPLVNAMLEKLTAMGKIERIELDHSGCLTGSCKSCPEGHQHCNTVIYQLKEPHAHQ.

Iron-sulfur cluster is bound by residues cysteine 56, cysteine 61, cysteine 64, and cysteine 71.

The protein belongs to the FeoC family.

Its function is as follows. May function as a transcriptional regulator that controls feoABC expression. This Yersinia pseudotuberculosis serotype O:1b (strain IP 31758) protein is Probable [Fe-S]-dependent transcriptional repressor.